The following is a 518-amino-acid chain: OTU domain-containing protein 5 (518 aa).

Disordered regions lie at residues 1–79 and 105–144; these read MTIL…SGGA and PGHS…ETAA. A compositionally biased stretch (pro residues) spans 39-53; that stretch reads SSPPPRWAYPGNPAP. The span at 116 to 125 shows a compositional bias: low complexity; the sequence is SAGPGAPGSS. The region spanning 171-294 is the OTU domain; it reads FIIKQMKEDG…NIHYNSVVNP (124 aa). Residues 176–182 are cys-loop; the sequence is MKEDGAC. Asp179 is an active-site residue. The Nucleophile role is filled by Cys182. Positions 231–241 are variable-loop; that stretch reads KRKNNCHGNHI. A his-loop region spans residues 282–287; sequence YHRNIH. His287 is an active-site residue. Residues 371 to 450 are disordered; it reads ARQPRKASAT…GPSNQTCAGA (80 aa). A compositionally biased stretch (low complexity) spans 377 to 390; the sequence is ASATCSSATAAASS.

This sequence belongs to the peptidase C85 family.

It carries out the reaction Thiol-dependent hydrolysis of ester, thioester, amide, peptide and isopeptide bonds formed by the C-terminal Gly of ubiquitin (a 76-residue protein attached to proteins as an intracellular targeting signal).. Deubiquitinating enzyme that may function as negative regulator of the innate immune system. Has peptidase activity towards 'Lys-48'- and 'Lys-63'-linked polyubiquitin chains. Can also cleave 'Lys-11'-linked ubiquitin chains (in vitro). The polypeptide is OTU domain-containing protein 5 (otud5) (Xenopus tropicalis (Western clawed frog)).